The chain runs to 89 residues: Small ribosomal subunit protein uS15 (89 aa).

It belongs to the universal ribosomal protein uS15 family. As to quaternary structure, part of the 30S ribosomal subunit. Forms a bridge to the 50S subunit in the 70S ribosome, contacting the 23S rRNA.

One of the primary rRNA binding proteins, it binds directly to 16S rRNA where it helps nucleate assembly of the platform of the 30S subunit by binding and bridging several RNA helices of the 16S rRNA. In terms of biological role, forms an intersubunit bridge (bridge B4) with the 23S rRNA of the 50S subunit in the ribosome. The protein is Small ribosomal subunit protein uS15 of Aliivibrio salmonicida (strain LFI1238) (Vibrio salmonicida (strain LFI1238)).